A 181-amino-acid chain; its full sequence is MDSHQELSAGSPISYDFLDPDWCFKRYLTKDALHSIETGKGAAYFVPDGFTPILIPNSQSYLLDGNSAQLPRPQPISFTLDQCKVPGYILKSLRKDTKSTERTPRPPNAFILYRKEKHATLLKSNPSINNSQVSKLVGEMWRNESKEVRMRYFKMSEFYKAQHQKMYPGYKYQPRKNKVKR.

A DNA-binding region (HMG box) is located at residues 103–171 (TPRPPNAFIL…QHQKMYPGYK (69 aa)).

It localises to the nucleus. In terms of biological role, mating type proteins are sequence specific DNA-binding proteins that act as master switches in yeast differentiation by controlling gene expression in a cell type-specific fashion. Positive regulator of MFM genes. The HMG box recognizes the DNA sequence 5'-AACAAAG-3'. Required for conjugation and efficient meiosis. The protein is Mating-type M-specific polypeptide Mc (matMc) of Schizosaccharomyces kambucha (Fission yeast).